We begin with the raw amino-acid sequence, 341 residues long: Elongation factor G (341 aa).

The protein belongs to the GTP-binding elongation factor family. EF-G/EF-2 subfamily.

It is found in the cytoplasm. Functionally, catalyzes the GTP-dependent ribosomal translocation step during translation elongation. During this step, the ribosome changes from the pre-translocational (PRE) to the post-translocational (POST) state as the newly formed A-site-bound peptidyl-tRNA and P-site-bound deacylated tRNA move to the P and E sites, respectively. Catalyzes the coordinated movement of the two tRNA molecules, the mRNA and conformational changes in the ribosome. The sequence is that of Elongation factor G (fus) from Streptomyces ramocissimus.